Here is a 353-residue protein sequence, read N- to C-terminus: DNA-directed RNA polymerase subunit alpha (353 aa).

An alpha N-terminal domain (alpha-NTD) region spans residues 1–226; the sequence is MLISQRPTLT…ELFGLARELN (226 aa). The segment at 241 to 353 is alpha C-terminal domain (alpha-CTD); it reads ADHIASFGLP…TEDYAETEQL (113 aa). The disordered stretch occupies residues 326–353; sequence ATGTWSDTDAGSFGDAEGTEDYAETEQL. Residues 342-353 show a composition bias toward acidic residues; the sequence is EGTEDYAETEQL.

The protein belongs to the RNA polymerase alpha chain family. In terms of assembly, homodimer. The RNAP catalytic core consists of 2 alpha, 1 beta, 1 beta' and 1 omega subunit. When a sigma factor is associated with the core the holoenzyme is formed, which can initiate transcription.

The catalysed reaction is RNA(n) + a ribonucleoside 5'-triphosphate = RNA(n+1) + diphosphate. In terms of biological role, DNA-dependent RNA polymerase catalyzes the transcription of DNA into RNA using the four ribonucleoside triphosphates as substrates. This Rhodococcus jostii (strain RHA1) protein is DNA-directed RNA polymerase subunit alpha.